The chain runs to 29 residues: Dermaseptin-J9 (29 aa).

Expressed by the skin glands.

Its subcellular location is the secreted. In terms of biological role, has antimicrobial activity. This Phasmahyla jandaia (Jandaia leaf frog) protein is Dermaseptin-J9.